Consider the following 98-residue polypeptide: MTKSELIAELAAANPHLLSRDVELIVQTIFSEISAALARGDRVELRGFGAFTVKKRDARTGRNPRTGEMVAVDEKVVPFFKAGKELRERVNNGAPAED.

The protein belongs to the bacterial histone-like protein family. As to quaternary structure, heterodimer of an alpha and a beta chain.

In terms of biological role, this protein is one of the two subunits of integration host factor, a specific DNA-binding protein that functions in genetic recombination as well as in transcriptional and translational control. In Gluconacetobacter diazotrophicus (strain ATCC 49037 / DSM 5601 / CCUG 37298 / CIP 103539 / LMG 7603 / PAl5), this protein is Integration host factor subunit beta.